A 362-amino-acid chain; its full sequence is Very-long-chain (3R)-3-hydroxyacyl-CoA dehydratase (362 aa).

The Cytoplasmic portion of the chain corresponds to 1 to 149 (MADCSLRPHV…DPFKHLKKGY (149 aa)). The CS domain occupies 5 to 94 (SLRPHVHWAQ…KESSWWERLT (90 aa)). A coiled-coil region spans residues 111–135 (LDESDAEMELKEKEEEKINKMKIES). A helical membrane pass occupies residues 150–170 (LIMYNLVQFLGFSWIFVNMTV). At 171–189 (RLFILGKDSFYDTFHTIAD) the chain is on the lumenal side. A helical transmembrane segment spans residues 190 to 210 (MMYFCQTLALMEILNSLIGLV). Over 211–212 (RS) the chain is Cytoplasmic. A helical membrane pass occupies residues 213–233 (PLIPAVIQVFGRNFILFVVLG). The Lumenal portion of the chain corresponds to 234–242 (SLEEMQSKA). Residues 243 to 263 (VVFFLFYFWSIIELFRYPYYM) form a helical membrane-spanning segment. At 264–282 (LSCMGIEWKPLTWLRYTSW) the chain is on the cytoplasmic side. The helical transmembrane segment at 283–303 (IPLYPLGGLAEAVCLIQSIPI) threads the bilayer. Residues tyrosine 286 and glutamate 293 contribute to the active site. Topologically, residues 304–319 (FSETGKFSLGLPNPLN) are lumenal. A helical transmembrane segment spans residues 320-340 (VTIQFSFLLQMYLIALFLGLF). Residues 341 to 362 (VNFRYLYKQRKQHLGPKKRKMK) lie on the Cytoplasmic side of the membrane.

Belongs to the very long-chain fatty acids dehydratase HACD family.

The protein localises to the endoplasmic reticulum membrane. It catalyses the reaction a very-long-chain (3R)-3-hydroxyacyl-CoA = a very-long-chain (2E)-enoyl-CoA + H2O. The catalysed reaction is (3R)-hydroxyhexadecanoyl-CoA = (2E)-hexadecenoyl-CoA + H2O. Its pathway is lipid metabolism; fatty acid biosynthesis. Its function is as follows. Catalyzes the third of the four reactions of the long-chain fatty acids elongation cycle. This endoplasmic reticulum-bound enzymatic process, allows the addition of two carbons to the chain of long- and very long-chain fatty acids/VLCFAs per cycle. This enzyme catalyzes the dehydration of the 3-hydroxyacyl-CoA intermediate into trans-2,3-enoyl-CoA, within each cycle of fatty acid elongation. Thereby, it participates in the production of VLCFAs of different chain lengths that are involved in multiple biological processes as precursors of membrane lipids and lipid mediators. Involved in Rac1-signaling pathways leading to the modulation of gene expression. This chain is Very-long-chain (3R)-3-hydroxyacyl-CoA dehydratase, found in Gallus gallus (Chicken).